The primary structure comprises 230 residues: Ribonuclease 3 (230 aa).

The RNase III domain maps to 5–125 (YSRFYNILGY…VIGAIYLDSD (121 aa)). Glutamate 40 contributes to the Mg(2+) binding site. Aspartate 44 is an active-site residue. Mg(2+)-binding residues include aspartate 111 and glutamate 114. Glutamate 114 is a catalytic residue. The region spanning 153 to 223 (DSKSKLQEIL…AEKMIEMLSQ (71 aa)) is the DRBM domain.

The protein belongs to the ribonuclease III family. As to quaternary structure, homodimer. The cofactor is Mg(2+).

It is found in the cytoplasm. The enzyme catalyses Endonucleolytic cleavage to 5'-phosphomonoester.. Digests double-stranded RNA. Involved in the processing of primary rRNA transcript to yield the immediate precursors to the large and small rRNAs (23S and 16S). Processes some mRNAs, and tRNAs when they are encoded in the rRNA operon. Processes pre-crRNA and tracrRNA of type II CRISPR loci if present in the organism. This chain is Ribonuclease 3, found in Francisella tularensis subsp. holarctica (strain LVS).